Here is a 72-residue protein sequence, read N- to C-terminus: SRY-related protein AES2 (72 aa).

A DNA-binding region (HMG box) is located at residues 1–69 (VKRPMNAFMV…KHMADYPDYK (69 aa)).

The protein resides in the nucleus. This Alligator mississippiensis (American alligator) protein is SRY-related protein AES2.